A 172-amino-acid chain; its full sequence is Thioredoxin M5, chloroplastic (172 aa).

A chloroplast-targeting transit peptide spans 1 to 59; that stretch reads MALETCFRAWATLHAPQPPSSGGSRDRLLLSGAGSSQSKPRLSVASPSPLRPASRFACQ. Residues 17-47 form a disordered region; it reads QPPSSGGSRDRLLLSGAGSSQSKPRLSVASP. The 112-residue stretch at 60-171 folds into the Thioredoxin domain; sequence CSNVVDEVVV…LATIIDKYVS (112 aa). Catalysis depends on nucleophile residues Cys-95 and Cys-98. A disulfide bridge links Cys-95 with Cys-98.

Belongs to the thioredoxin family. Plant M-type subfamily. In terms of tissue distribution, expressed in leaves and at lower levels in flowers.

It localises to the plastid. The protein localises to the chloroplast. Thiol-disulfide oxidoreductase probably involved in the redox regulation of chloroplastic enzymes. Required for chloroplast biogenesis and differentiation. Functions as an electron donor for plastidial 2-Cys peroxiredoxins and participates in hydrogen peroxide scavenging system in chloroplasts. Possesses reducing activity towards insulin disulfide bonds. The polypeptide is Thioredoxin M5, chloroplastic (TRXM) (Oryza sativa subsp. japonica (Rice)).